The primary structure comprises 266 residues: Ribosomal RNA small subunit methyltransferase A (266 aa).

Residues Asn-11, Leu-13, Gly-37, Glu-57, Asp-85, and Asn-104 each coordinate S-adenosyl-L-methionine.

It belongs to the class I-like SAM-binding methyltransferase superfamily. rRNA adenine N(6)-methyltransferase family. RsmA subfamily.

The protein localises to the cytoplasm. It carries out the reaction adenosine(1518)/adenosine(1519) in 16S rRNA + 4 S-adenosyl-L-methionine = N(6)-dimethyladenosine(1518)/N(6)-dimethyladenosine(1519) in 16S rRNA + 4 S-adenosyl-L-homocysteine + 4 H(+). Its function is as follows. Specifically dimethylates two adjacent adenosines (A1518 and A1519) in the loop of a conserved hairpin near the 3'-end of 16S rRNA in the 30S particle. May play a critical role in biogenesis of 30S subunits. This is Ribosomal RNA small subunit methyltransferase A from Campylobacter jejuni (strain RM1221).